A 399-amino-acid chain; its full sequence is MAREKFERNKPHVNIGTIGHVDHGKTTLTAAITNVLAKKGQAEVQNYADIDGAPEERERGITINTAHVEYETDSRHYAHVDCPGHADYVKNMITGAAQMDGAILVCAATDGPMAQTKEHILLAKQVGVPALVVALNKCDMVDDEEIIELVELEIRELLSSYDFPGDDIPVVQVSGLKAIEGEAEWEAKIEELMAAVDASIPEPEREVDKPFLMAIEDVFSITGRGTVATGRIERGIVKVGEEVEVVGIREPRKTTVTGVEMFRKLLDEGMAGDNVGLLLRGIQKEDIERGMVLVKPGSITPHTKFEGQVYVLKKEEGGRHTPFFAGYRPQFYIRTTDVTGQITAFTAEDGSNVEMVMPGDNIQMTGELICPVAMELGMRFAIREGGRTIGAGVVSKIIE.

The tr-type G domain maps to 10 to 204; that stretch reads KPHVNIGTIG…AVDASIPEPE (195 aa). Residues 19 to 26 are G1; the sequence is GHVDHGKT. 19–26 provides a ligand contact to GTP; the sequence is GHVDHGKT. Mg(2+) is bound at residue Thr26. The segment at 60–64 is G2; the sequence is GITIN. Residues 81–84 form a G3 region; the sequence is DCPG. GTP is bound by residues 81 to 85 and 136 to 139; these read DCPGH and NKCD. A G4 region spans residues 136–139; it reads NKCD. The segment at 174 to 176 is G5; sequence SGL.

The protein belongs to the TRAFAC class translation factor GTPase superfamily. Classic translation factor GTPase family. EF-Tu/EF-1A subfamily. In terms of assembly, monomer.

It localises to the cytoplasm. The catalysed reaction is GTP + H2O = GDP + phosphate + H(+). Functionally, GTP hydrolase that promotes the GTP-dependent binding of aminoacyl-tRNA to the A-site of ribosomes during protein biosynthesis. This is Elongation factor Tu from Synechococcus sp. (strain CC9311).